The sequence spans 469 residues: DNA polymerase delta subunit 2 (469 aa).

Met-1 carries the N-acetylmethionine modification. Ser-257 carries the post-translational modification Phosphoserine.

This sequence belongs to the DNA polymerase delta/II small subunit family. As to quaternary structure, component of both the DNA polymerase delta and DNA polymerase zeta complexes. Component of the tetrameric DNA polymerase delta complex (Pol-delta4), which consists of POLD1/p125, POLD2/p50, POLD3/p66/p68 and POLD4/p12, with POLD1 bearing DNA polymerase and 3' to 5' proofreading exonuclease activities. Within Pol-delta4, directly interacts with POLD1, POLD3 and POLD4. Following stress caused by DNA damaging agents or by replication stress, POLD4 is degraded and Pol-delta4 is converted into a trimeric form of the complex (Pol-delta3), which consists of POLD1, POLD2 and POLD3. Pol-delta3 is the major form occurring at S phase replication sites, as well as DNA damage sites. Also observed as a dimeric complex with POLD2 (Pol-delta2 complex). Pol-delta2 is relatively insensitive to the PCNA stimulation (2-5-fold) compared to Pol-delta4 that is stimulated by over 50-fold. Contrary to the other components of Pol-delta4, does not directly interact with PCNA. As POLD1 and POLD4, directly interacts with WRNIP1; this interaction stimulates DNA polymerase delta-mediated DNA synthesis, independently of the presence of PCNA. This stimulation may be due predominantly to an increase of initiation frequency and also to increased processivity. Directly interacts with POLDIP2 and POLDIP3. Directly interacts with KCTD13/PDIP1; in the presence of PCNA, this interaction may stimulate DNA polymerase activity. Component of the tetrameric Pol-zeta complex (Pol-zeta4), which consists of REV3L, MAD2L2, POLD2 and POLD3, with REV3L bearing DNA polymerase catalytic activity. Interacts with KCTD10.

It localises to the nucleus. Accessory component of both the DNA polymerase delta complex and the DNA polymerase zeta complex. As a component of the trimeric and tetrameric DNA polymerase delta complexes (Pol-delta3 and Pol-delta4, respectively), plays a role in high fidelity genome replication, including in lagging strand synthesis, and repair. Pol-delta3 and Pol-delta4 are characterized by the absence or the presence of POLD4. They exhibit differences in catalytic activity. Most notably, Pol-delta3 shows higher proofreading activity than Pol-delta4. Although both Pol-delta3 and Pol-delta4 process Okazaki fragments in vitro, Pol-delta3 may also be better suited to fulfill this task, exhibiting near-absence of strand displacement activity compared to Pol-delta4 and stalling on encounter with the 5'-blocking oligonucleotides. Pol-delta3 idling process may avoid the formation of a gap, while maintaining a nick that can be readily ligated. Along with DNA polymerase kappa, DNA polymerase delta carries out approximately half of nucleotide excision repair (NER) synthesis following UV irradiation. Under conditions of DNA replication stress, required for the repair of broken replication forks through break-induced replication (BIR). Involved in the translesion synthesis (TLS) of templates carrying O6-methylguanine or abasic sites performed by Pol-delta4, independently of DNA polymerase zeta (REV3L) or eta (POLH). Facilitates abasic site bypass by DNA polymerase delta by promoting extension from the nucleotide inserted opposite the lesion. Also involved in TLS as a component of the DNA polymerase zeta complex. Along with POLD3, dramatically increases the efficiency and processivity of DNA synthesis of the DNA polymerase zeta complex compared to the minimal zeta complex, consisting of only REV3L and REV7. This Mus musculus (Mouse) protein is DNA polymerase delta subunit 2 (Pold2).